The chain runs to 232 residues: Cytidylate kinase (232 aa).

An ATP-binding site is contributed by 15–23 (GPAGAGKST). A disordered region spans residues 164 to 192 (KEDPPPISQGQLAAEMKERDMRDSTRADA). Over residues 178-189 (EMKERDMRDSTR) the composition is skewed to basic and acidic residues.

This sequence belongs to the cytidylate kinase family. Type 1 subfamily.

The protein resides in the cytoplasm. The catalysed reaction is CMP + ATP = CDP + ADP. It catalyses the reaction dCMP + ATP = dCDP + ADP. The polypeptide is Cytidylate kinase (Solibacter usitatus (strain Ellin6076)).